Reading from the N-terminus, the 335-residue chain is tRNA N6-adenosine threonylcarbamoyltransferase (335 aa).

Residues His109, His113, and Tyr130 each coordinate a divalent metal cation. Substrate-binding positions include 130–134, Asp162, Gly177, Glu181, and Asn266; that span reads YVSGG. Asp294 contributes to the a divalent metal cation binding site.

The protein belongs to the KAE1 / TsaD family. In terms of assembly, component of the EKC/KEOPS complex composed of at least GON7, TP53RK, TPRKB, OSGEP and LAGE3; the whole complex dimerizes. The cofactor is a divalent metal cation. Widely expressed at low level. Expressed at intermediate level in lung. Weakly expressed in testis, skeletal muscle, kidney, liver, spleen, brain and heart.

It is found in the cytoplasm. The protein localises to the nucleus. It catalyses the reaction L-threonylcarbamoyladenylate + adenosine(37) in tRNA = N(6)-L-threonylcarbamoyladenosine(37) in tRNA + AMP + H(+). Functionally, component of the EKC/KEOPS complex that is required for the formation of a threonylcarbamoyl group on adenosine at position 37 (t(6)A37) in tRNAs that read codons beginning with adenine. The complex is probably involved in the transfer of the threonylcarbamoyl moiety of threonylcarbamoyl-AMP (TC-AMP) to the N6 group of A37. OSGEP likely plays a direct catalytic role in this reaction, but requires other protein(s) of the complex to fulfill this activity. This chain is tRNA N6-adenosine threonylcarbamoyltransferase (Osgep), found in Mus musculus (Mouse).